The sequence spans 245 residues: Orotidine 5'-phosphate decarboxylase (245 aa).

Residues aspartate 22, lysine 44, 71–80 (DLKFHDIPNT), threonine 131, arginine 192, glutamine 201, glycine 221, and arginine 222 each bind substrate. Lysine 73 (proton donor) is an active-site residue.

This sequence belongs to the OMP decarboxylase family. Type 1 subfamily. As to quaternary structure, homodimer.

The enzyme catalyses orotidine 5'-phosphate + H(+) = UMP + CO2. It functions in the pathway pyrimidine metabolism; UMP biosynthesis via de novo pathway; UMP from orotate: step 2/2. Catalyzes the decarboxylation of orotidine 5'-monophosphate (OMP) to uridine 5'-monophosphate (UMP). The polypeptide is Orotidine 5'-phosphate decarboxylase (Escherichia fergusonii (strain ATCC 35469 / DSM 13698 / CCUG 18766 / IAM 14443 / JCM 21226 / LMG 7866 / NBRC 102419 / NCTC 12128 / CDC 0568-73)).